We begin with the raw amino-acid sequence, 125 residues long: Fluoride-specific ion channel FluC (125 aa).

Transmembrane regions (helical) follow at residues 36 to 56, 65 to 85, and 99 to 119; these read GTIF…FLSI, FILF…TFAY, and IIYF…GMFL. Residues Gly-75 and Thr-78 each contribute to the Na(+) site.

This sequence belongs to the fluoride channel Fluc/FEX (TC 1.A.43) family.

The protein resides in the cell inner membrane. The enzyme catalyses fluoride(in) = fluoride(out). Na(+) is not transported, but it plays an essential structural role and its presence is essential for fluoride channel function. In terms of biological role, fluoride-specific ion channel. Important for reducing fluoride concentration in the cell, thus reducing its toxicity. In Thermosipho africanus (strain TCF52B), this protein is Fluoride-specific ion channel FluC.